The following is a 65-amino-acid chain: Putative primary metabolism protein prl65 (65 aa).

Residues 1-25 form a disordered region; that stretch reads MTKYSKGNKVEYHPIGGPSGTSTST.

Functionally, may play a role in primary metabolism. The polypeptide is Putative primary metabolism protein prl65 (Schizosaccharomyces pombe (strain 972 / ATCC 24843) (Fission yeast)).